A 567-amino-acid chain; its full sequence is Lactase-like protein (567 aa).

The first 21 residues, 1–21, serve as a signal peptide directing secretion; the sequence is MKPVWVATLLWMLLLVPRLGA. The Extracellular segment spans residues 23–541; that stretch reads RKGSPEEASF…LLSHMQMVTE (519 aa). N-linked (GlcNAc...) asparagine glycans are attached at residues Asn80, Asn171, and Asn245. Residues 542–562 traverse the membrane as a helical segment; that stretch reads IVVPTVCSLCVLITAVLLMLL. At 563 to 567 the chain is on the cytoplasmic side; sequence LRRQS.

It belongs to the glycosyl hydrolase 1 family. Klotho subfamily. As to quaternary structure, may form dimers.

It localises to the endoplasmic reticulum membrane. Plays a role in formation of the lens suture in the eye, which is important for normal optical properties of the lens. The protein is Lactase-like protein (LCTL) of Homo sapiens (Human).